A 185-amino-acid chain; its full sequence is Nodulin-20 (185 aa).

The signal sequence occupies residues 1–17 (MRVVLITLFLFIGAAVA).

Belongs to the nodulin 20 family.

It is found in the symbiosome. Its subcellular location is the peribacteroid membrane. It localises to the peribacteroid space. This is Nodulin-20 from Glycine max (Soybean).